The chain runs to 37 residues: Large ribosomal subunit protein bL36 (37 aa).

Belongs to the bacterial ribosomal protein bL36 family.

The sequence is that of Large ribosomal subunit protein bL36 from Vibrio atlanticus (strain LGP32) (Vibrio splendidus (strain Mel32)).